A 163-amino-acid chain; its full sequence is Gas vesicle protein H2 (163 aa).

The disordered stretch occupies residues 57–92 (LGSDARSPSTPAGNADDAGDAETAHIETRASDDSDD). Positions 78–88 (ETAHIETRASD) are enriched in basic and acidic residues.

Belongs to the gas vesicle GvpH family. As to quaternary structure, gvpF to GvpM interact with each other in vitro, and may form multi-subunit complex(es). Interacts with GvpC. Might interact with GvpA.

The protein resides in the gas vesicle. Its subcellular location is the cytoplasm. In terms of biological role, a minor component of the gas vesicle, also found in soluble extracts. Proteins GvpF to GvpM might be involved in nucleating gas vesicle formation. Gas vesicles are hollow, gas filled proteinaceous nanostructures found in several microbial planktonic microorganisms. They allow positioning of halobacteria at the optimal depth for growth in the poorly aerated, shallow brine pools of their habitat. Expression of 2 c-vac DNA fragments containing 2 divergently transcribed regions (gvpE-gvpF-gvpG-gvpH-gvpI-gvpJ-gvpK-gvpL-gvpM and gvpA-gvpC-gvpN-gvpO) allows H.volcanii to produce gas vesicles. The polypeptide is Gas vesicle protein H2 (Halobacterium salinarum (strain ATCC 700922 / JCM 11081 / NRC-1) (Halobacterium halobium)).